The primary structure comprises 562 residues: MFS-type efflux pump elcC (562 aa).

A run of 11 helical transmembrane segments spans residues Trp50–Pro70, Val80–Phe100, Gly111–Phe131, Leu139–Val159, Leu184–Gly204, Ile215–Trp235, Ile257–Phe277, Ser288–Gly308, Met309–Val329, Val351–Ala371, and Val383–Phe403. Residue Asn448 is glycosylated (N-linked (GlcNAc...) asparagine). A helical membrane pass occupies residues Phe455 to Leu475. The segment at Glu515–Asn562 is disordered. Over residues Asn533 to Asn554 the composition is skewed to polar residues.

Belongs to the major facilitator superfamily. TCR/Tet family.

It localises to the cell membrane. In terms of biological role, MFS-type efflux pump; part of the gene cluster that mediates the biosynthesis of elsinochrome C, a perelyenequinone phytotoxin structurally similar to cercosporin. This Phaeosphaeria nodorum (strain SN15 / ATCC MYA-4574 / FGSC 10173) (Glume blotch fungus) protein is MFS-type efflux pump elcC.